The primary structure comprises 573 residues: Cytosolic 5'-nucleotidase 1B (573 aa).

Basic residues predominate over residues 1–11 (MSQTSLKHKKK). Disordered stretches follow at residues 1-200 (MSQT…PPTE) and 218-238 (EPEY…EEDE). Residues 12 to 35 (NEPGMRYSKESLDAEKRKDSDKTG) are compositionally biased toward basic and acidic residues. Residues 60–73 (NQWSRTSRSPSTGA) show a composition bias toward polar residues. Residues 93–105 (SSTTSRTSSASPS) show a composition bias toward low complexity. Residues 115–136 (TSEKSSIQQTPQNRPITQLESQ) show a composition bias toward polar residues. 2 stretches are compositionally biased toward basic and acidic residues: residues 161-174 (WAHR…DLQL) and 182-194 (DSRE…REYP). The active-site Nucleophile is aspartate 428.

This sequence belongs to the 5'-nucleotidase type 3 family. Mg(2+) is required as a cofactor. Expressed at highest levels in testis. Also expressed in brain, skeletal muscle, kidney and heart.

The protein localises to the cytoplasm. It catalyses the reaction a ribonucleoside 5'-phosphate + H2O = a ribonucleoside + phosphate. The catalysed reaction is AMP + H2O = adenosine + phosphate. Activated by ADP. Its function is as follows. Catalyzes the hydrolysis of nucleotide monophosphates, releasing inorganic phosphate and the corresponding nucleoside, AMP is the major substrate. This Mus musculus (Mouse) protein is Cytosolic 5'-nucleotidase 1B (Nt5c1b).